The following is a 272-amino-acid chain: Acetylglutamate kinase (272 aa).

Substrate is bound by residues 41–42, Arg63, and Asn166; that span reads GG.

Belongs to the acetylglutamate kinase family. ArgB subfamily.

It localises to the cytoplasm. It carries out the reaction N-acetyl-L-glutamate + ATP = N-acetyl-L-glutamyl 5-phosphate + ADP. It participates in amino-acid biosynthesis; L-arginine biosynthesis; N(2)-acetyl-L-ornithine from L-glutamate: step 2/4. Functionally, catalyzes the ATP-dependent phosphorylation of N-acetyl-L-glutamate. The polypeptide is Acetylglutamate kinase (Anaeromyxobacter sp. (strain K)).